The sequence spans 238 residues: MAEIKYKRVLLKLSGEALSGEKGFGFDPETAKAVAEELKEVHDLGAELAIVCGGGNVWRGVTGEKAGMERAQADYMGMLATIQNGLFIQSALENIGVDTRVMTAIEMKAVAEPYIRRRAERHLEKGRVVIFAGGTGSPYFSTDTTSALRAAEINADVILMAKNGVDGVYNADPKLVADAIKFEHLTHMDVITKGLQVMDSTASTMSMDNHIPLVVFNMNEAGNITRVVRGEEIGTTVE.

12-15 (KLSG) is an ATP binding site. Positions 20-25 (GEKGFG) are involved in allosteric activation by GTP. Glycine 54 lines the UMP pocket. Residues glycine 55 and arginine 59 each contribute to the ATP site. UMP-binding positions include aspartate 74 and 135-142 (TGSPYFST). The ATP site is built by asparagine 163, tyrosine 169, and aspartate 172.

The protein belongs to the UMP kinase family. In terms of assembly, homohexamer.

It is found in the cytoplasm. It carries out the reaction UMP + ATP = UDP + ADP. The protein operates within pyrimidine metabolism; CTP biosynthesis via de novo pathway; UDP from UMP (UMPK route): step 1/1. Its activity is regulated as follows. Allosterically activated by GTP. Inhibited by UTP. Catalyzes the reversible phosphorylation of UMP to UDP. The polypeptide is Uridylate kinase (Lactococcus lactis subsp. lactis (strain IL1403) (Streptococcus lactis)).